The chain runs to 353 residues: Photosystem II protein D1 (353 aa).

N-acetylthreonine is present on Thr-2. Thr-2 carries the phosphothreonine modification. 3 helical membrane passes run 29 to 46, 118 to 133, and 142 to 156; these read YIGW…TATS, HFLL…EWEL, and WIAV…AATA. His-118 provides a ligand contact to chlorophyll a. Tyr-126 lines the pheophytin a pocket. 2 residues coordinate [CaMn4O5] cluster: Asp-170 and Glu-189. Residues 197–218 form a helical membrane-spanning segment; that stretch reads FHMLGVAGVFGGSLFSAMHGSL. His-198 serves as a coordination point for chlorophyll a. A quinone is bound by residues His-215 and 264 to 265; that span reads SF. A Fe cation-binding site is contributed by His-215. His-272 is a Fe cation binding site. The helical transmembrane segment at 274 to 288 threads the bilayer; the sequence is FLAAWPVIGIWFTAL. [CaMn4O5] cluster contacts are provided by His-332, Glu-333, Asp-342, and Ala-344. A propeptide spanning residues 345 to 353 is cleaved from the precursor; the sequence is SVEAPSVNG.

It belongs to the reaction center PufL/M/PsbA/D family. In terms of assembly, PSII is composed of 1 copy each of membrane proteins PsbA, PsbB, PsbC, PsbD, PsbE, PsbF, PsbH, PsbI, PsbJ, PsbK, PsbL, PsbM, PsbT, PsbX, PsbY, PsbZ, Psb30/Ycf12, at least 3 peripheral proteins of the oxygen-evolving complex and a large number of cofactors. It forms dimeric complexes. Requires The D1/D2 heterodimer binds P680, chlorophylls that are the primary electron donor of PSII, and subsequent electron acceptors. It shares a non-heme iron and each subunit binds pheophytin, quinone, additional chlorophylls, carotenoids and lipids. D1 provides most of the ligands for the Mn4-Ca-O5 cluster of the oxygen-evolving complex (OEC). There is also a Cl(-1) ion associated with D1 and D2, which is required for oxygen evolution. The PSII complex binds additional chlorophylls, carotenoids and specific lipids. as cofactor. Tyr-161 forms a radical intermediate that is referred to as redox-active TyrZ, YZ or Y-Z. Post-translationally, C-terminally processed by CTPA; processing is essential to allow assembly of the oxygen-evolving complex and thus photosynthetic growth.

It localises to the plastid. The protein localises to the chloroplast thylakoid membrane. It catalyses the reaction 2 a plastoquinone + 4 hnu + 2 H2O = 2 a plastoquinol + O2. In terms of biological role, photosystem II (PSII) is a light-driven water:plastoquinone oxidoreductase that uses light energy to abstract electrons from H(2)O, generating O(2) and a proton gradient subsequently used for ATP formation. It consists of a core antenna complex that captures photons, and an electron transfer chain that converts photonic excitation into a charge separation. The D1/D2 (PsbA/PsbD) reaction center heterodimer binds P680, the primary electron donor of PSII as well as several subsequent electron acceptors. The chain is Photosystem II protein D1 from Chlorokybus atmophyticus (Soil alga).